Reading from the N-terminus, the 652-residue chain is Leucine aminopeptidase 2 (652 aa).

Residues 165–167 and 293–298 contribute to the a peptide site; these read QLE and PYGGME. His-322 is a Zn(2+) binding site. Glu-323 (proton acceptor) is an active-site residue. Zn(2+) is bound by residues His-326 and Glu-345. The Proton donor role is filled by Tyr-411.

Belongs to the peptidase M1 family. Requires Zn(2+) as cofactor.

It localises to the cytoplasm. Its subcellular location is the nucleus. It catalyses the reaction an epoxide + H2O = an ethanediol. Aminopeptidase that preferentially cleaves di- and tripeptides. Also has low epoxide hydrolase activity (in vitro). Can hydrolyze the epoxide leukotriene LTA(4) but it forms preferentially 5,6-dihydroxy-7,9,11,14-eicosatetraenoic acid rather than the cytokine leukotriene B(4) as the product compared to the homologous mammalian enzyme (in vitro). The polypeptide is Leucine aminopeptidase 2 (Candida glabrata (strain ATCC 2001 / BCRC 20586 / JCM 3761 / NBRC 0622 / NRRL Y-65 / CBS 138) (Yeast)).